A 123-amino-acid chain; its full sequence is uncharacterized protein (123 aa).

The next 2 helical transmembrane spans lie at 53-73 and 75-95; these read VWFL…FFFL and VLWF…VFSH.

Its subcellular location is the membrane. This is an uncharacterized protein from Saccharomyces cerevisiae (strain ATCC 204508 / S288c) (Baker's yeast).